A 178-amino-acid polypeptide reads, in one-letter code: uncharacterized protein (178 aa).

This is an uncharacterized protein from Bacillus subtilis (strain 168).